We begin with the raw amino-acid sequence, 342 residues long: S-adenosylmethionine:tRNA ribosyltransferase-isomerase (342 aa).

This sequence belongs to the QueA family. As to quaternary structure, monomer.

Its subcellular location is the cytoplasm. The catalysed reaction is 7-aminomethyl-7-carbaguanosine(34) in tRNA + S-adenosyl-L-methionine = epoxyqueuosine(34) in tRNA + adenine + L-methionine + 2 H(+). It participates in tRNA modification; tRNA-queuosine biosynthesis. Transfers and isomerizes the ribose moiety from AdoMet to the 7-aminomethyl group of 7-deazaguanine (preQ1-tRNA) to give epoxyqueuosine (oQ-tRNA). This Listeria monocytogenes serotype 4b (strain F2365) protein is S-adenosylmethionine:tRNA ribosyltransferase-isomerase.